The sequence spans 289 residues: Mitochondrial fission regulator 1-like (289 aa).

Position 27 is a phosphothreonine (threonine 27). A phosphoserine mark is found at serine 38, serine 100, serine 107, serine 221, serine 222, serine 235, serine 258, and serine 270.

Belongs to the MTFR1 family. In terms of processing, phosphorylated by AMPK. Upon stress, phosphorylation by AMPK is sufficient to induce mitochondrial fragmentation.

It localises to the mitochondrion outer membrane. In terms of biological role, mitochondrial protein required for adaptation of miochondrial dynamics to metabolic changes. Regulates mitochondrial morphology at steady state and mediates AMPK-dependent stress-induced mitochondrial fragmentation via the control of OPA1 levels. In Rattus norvegicus (Rat), this protein is Mitochondrial fission regulator 1-like (Mtfr1l).